Here is a 60-residue protein sequence, read N- to C-terminus: UPF0434 protein YcaR (60 aa).

Belongs to the UPF0434 family.

The protein is UPF0434 protein YcaR of Escherichia coli O139:H28 (strain E24377A / ETEC).